We begin with the raw amino-acid sequence, 93 residues long: OMEGA-ectatommitoxin(02)-Rm1c (93 aa).

A signal peptide spans 1 to 30 (MKDSYISIVIAYLMVTFILVSSMPIEGEKG). Cystine bridges form between Cys39/Cys52, Cys47/Cys68, and Cys70/Cys79. An EGF-like domain is found at 43-80 (YENYCFNGKCVHVVAQDEPGKPCYSCICDEFYIGERCG).

Belongs to the EGF domain peptide family. Expressed by the venom gland.

It localises to the secreted. Ant peptide with probable defensive activity which acts as a potent agonist of the mammalian epidermal growth factor receptor (EGFR). Mimics, both structurally and functionally, vertebrate epidermal growth factor (EGF) peptide hormones. In vivo, intraplantar injection in mice causes long-lasting (several days) hypersensitivity of the injected paw to both mechanical and thermal stimuli. Its long-lasting effect is unusual for venom toxins whose effects are usually immediate. One possible explanation is that it would reduce the duration of a nest attack, discourage future attacks, or enhance the actions of subsequent exposure to other pain-inducing venom peptides. The sequence is that of OMEGA-ectatommitoxin(02)-Rm1c from Rhytidoponera metallica (Australian green-headed ant).